The primary structure comprises 1025 residues: Multidrug resistance protein MdtC (1025 aa).

The next 12 membrane-spanning stretches (helical) occupy residues 3 to 23 (FFAL…AITL), 333 to 353 (EVEQ…FLFL), 360 to 380 (IIPA…MYLC), 387 to 407 (LSLM…IVVL), 431 to 451 (VGFT…PLLL), 463 to 483 (FAVT…TLTP), 528 to 548 (LVGV…ISIP), 853 to 873 (VILI…LYES), 875 to 895 (VHPL…LLAL), 897 to 917 (LFNA…IGIV), 953 to 973 (PIMM…LSGG), and 984 to 1004 (ITIV…TPVV).

It belongs to the resistance-nodulation-cell division (RND) (TC 2.A.6) family. MdtC subfamily. In terms of assembly, part of a tripartite efflux system composed of MdtA, MdtB and MdtC. MdtC forms a heteromultimer with MdtB.

It localises to the cell inner membrane. The MdtABC tripartite complex confers resistance against novobiocin and deoxycholate. In Escherichia coli (strain UTI89 / UPEC), this protein is Multidrug resistance protein MdtC.